We begin with the raw amino-acid sequence, 378 residues long: Odorant receptor 45a (378 aa).

Residues 1–30 are Cytoplasmic-facing; sequence MDASYFAVQRRALEIVGFDPSTPQLSLKHP. Residues 31 to 51 traverse the membrane as a helical segment; the sequence is IWAGILILSLISHNWPMVVYA. At 52-129 the chain is on the extracellular side; it reads LQDLSDLTRL…RYVARSFRNA (78 aa). The chain crosses the membrane as a helical span at residues 130–150; it reads AYGVICASAIAPMLLGLWGYV. Topologically, residues 151 to 173 are cytoplasmic; that stretch reads ETGVFTPTTPMEFNFWLDERKPH. Residues 174 to 194 traverse the membrane as a helical segment; the sequence is FYWPIYVWGVLGVAAAAWLAI. Over 195 to 197 the chain is Extracellular; the sequence is ATD. A helical transmembrane segment spans residues 198–218; sequence TLFSWLTHNVVIQFQLLELVL. The Cytoplasmic segment spans residues 219–249; the sequence is EEKDLNGGDSRLTGFVSRHRIALDLAKELSS. Residues 250–270 traverse the membrane as a helical segment; the sequence is IFGEIVFVKYMLSYLQLCMLA. The Extracellular segment spans residues 271-285; it reads FRFSRSGWSAQVPFR. A helical transmembrane segment spans residues 286 to 306; the sequence is ATFLVAIIIQLSSYCYGGEYI. Topologically, residues 307 to 342 are cytoplasmic; it reads KQQSLAIAQAVYGQINWPEMTPKKRRLWQMVIMRAQ. The helical transmembrane segment at 343-363 threads the bilayer; sequence RPAKIFGFMFVVDLPLLLWVI. At 364-378 the chain is on the extracellular side; the sequence is RTAGSFLAMLRTFER.

Belongs to the insect chemoreceptor superfamily. Heteromeric odorant receptor channel (TC 1.A.69) family. Or1a subfamily. In terms of assembly, interacts with Orco. Complexes exist early in the endomembrane system in olfactory sensory neurons (OSNs), coupling these complexes to the conserved ciliary trafficking pathway.

The protein localises to the cell membrane. In terms of biological role, odorant receptor which mediates acceptance or avoidance behavior, depending on its substrates. The odorant receptor repertoire encodes a large collection of odor stimuli that vary widely in identity, intensity, and duration. May form a complex with Orco to form odorant-sensing units, providing sensitive and prolonged odorant signaling and calcium permeability. Involved in the behavioral responses to hexanol, pentyl acetate, benzyl acetate, and 2-heptanone. The polypeptide is Odorant receptor 45a (Or45a) (Drosophila melanogaster (Fruit fly)).